We begin with the raw amino-acid sequence, 319 residues long: Methionyl-tRNA formyltransferase (319 aa).

Ser-116–Pro-119 provides a ligand contact to (6S)-5,6,7,8-tetrahydrofolate.

Belongs to the Fmt family.

It carries out the reaction L-methionyl-tRNA(fMet) + (6R)-10-formyltetrahydrofolate = N-formyl-L-methionyl-tRNA(fMet) + (6S)-5,6,7,8-tetrahydrofolate + H(+). Functionally, attaches a formyl group to the free amino group of methionyl-tRNA(fMet). The formyl group appears to play a dual role in the initiator identity of N-formylmethionyl-tRNA by promoting its recognition by IF2 and preventing the misappropriation of this tRNA by the elongation apparatus. The sequence is that of Methionyl-tRNA formyltransferase from Wigglesworthia glossinidia brevipalpis.